We begin with the raw amino-acid sequence, 132 residues long: Agouti-signaling protein (132 aa).

The N-terminal stretch at 1 to 22 (MDVTRLLLATLLVFLCFFTADS) is a signal peptide. An N-linked (GlcNAc...) asparagine glycan is attached at N39. Residues 62–85 (ISRKEAEKKRSSKKEASMKTVARP) are disordered. The span at 63-78 (SRKEAEKKRSSKKEAS) shows a compositional bias: basic and acidic residues. Cystine bridges form between C93–C108, C100–C114, C107–C125, C111–C132, and C116–C123. Residues 93-132 (CVATRNSCKPPAPACCDPCASCQCRFFRSACSCRVLSLNC) enclose the Agouti domain.

The protein resides in the secreted. Functionally, involved in the regulation of melanogenesis. The binding of ASP to MC1R precludes alpha-MSH initiated signaling and thus blocks production of cAMP, leading to a down-regulation of eumelanogenesis (brown/black pigment) and thus increasing synthesis of pheomelanin (yellow/red pigment). In Pongo pygmaeus (Bornean orangutan), this protein is Agouti-signaling protein (ASIP).